The chain runs to 393 residues: S-adenosylmethionine synthase (393 aa).

Residue histidine 17 participates in ATP binding. Position 19 (aspartate 19) interacts with Mg(2+). Glutamate 45 is a binding site for K(+). Positions 58 and 104 each coordinate L-methionine. Positions 104-114 (QSAEIAQGVEE) are flexible loop. ATP-binding positions include 171-173 (DAK), aspartate 245, 251-252 (RK), alanine 268, and lysine 272. Aspartate 245 is an L-methionine binding site. Lysine 276 is a binding site for L-methionine.

This sequence belongs to the AdoMet synthase family. In terms of assembly, homotetramer; dimer of dimers. Mg(2+) serves as cofactor. It depends on K(+) as a cofactor.

The protein localises to the cytoplasm. It catalyses the reaction L-methionine + ATP + H2O = S-adenosyl-L-methionine + phosphate + diphosphate. It functions in the pathway amino-acid biosynthesis; S-adenosyl-L-methionine biosynthesis; S-adenosyl-L-methionine from L-methionine: step 1/1. In terms of biological role, catalyzes the formation of S-adenosylmethionine (AdoMet) from methionine and ATP. The overall synthetic reaction is composed of two sequential steps, AdoMet formation and the subsequent tripolyphosphate hydrolysis which occurs prior to release of AdoMet from the enzyme. The chain is S-adenosylmethionine synthase from Hyphomonas neptunium (strain ATCC 15444).